Consider the following 320-residue polypeptide: Cilia- and flagella-associated protein 77 (320 aa).

Residues 1 to 27 are disordered; sequence MPEARSSGPDLTRWRKQQQPVRRTVSQ. Polar residues predominate over residues 17–27; that stretch reads QQQPVRRTVSQ.

This sequence belongs to the CFAP77 family. In terms of assembly, microtubule inner protein component of sperm flagellar doublet microtubules. In terms of tissue distribution, expressed in airway epithelial cells.

The protein resides in the cytoplasm. It localises to the cytoskeleton. It is found in the cilium axoneme. The protein localises to the flagellum axoneme. Microtubule inner protein (MIP) part of the dynein-decorated doublet microtubules (DMTs) in cilia axoneme, which is required for motile cilia beating. The chain is Cilia- and flagella-associated protein 77 from Homo sapiens (Human).